The primary structure comprises 584 residues: Interferon regulatory factor 2-binding protein 1 (584 aa).

Residues 59–120 (HVLPEGRSPG…RYDRATSSSR (62 aa)) form a disordered region. Ser-66 bears the Phosphoserine mark. The segment covering 82 to 100 (STGSQGSQLPPPQAQAQPS) has biased composition (low complexity). Residue Ser-125 is modified to Phosphoserine. An Omega-N-methylarginine modification is found at Arg-177. Ser-186 carries the phosphoserine modification. Positions 197 to 217 (EKEKQQRNADCLAELNEAMRG) form a coiled coil. Lys-227 is covalently cross-linked (Glycyl lysine isopeptide (Lys-Gly) (interchain with G-Cter in SUMO2)). Disordered regions lie at residues 346-421 (PAEA…GVPS) and 433-495 (LGHS…GTGA). Residues 354-369 (YPEPAPAALCGPPPRA) show a composition bias toward pro residues. Phosphoserine is present on residues Ser-371, Ser-384, Ser-421, and Ser-436. Residue Lys-438 forms a Glycyl lysine isopeptide (Lys-Gly) (interchain with G-Cter in SUMO2) linkage. The span at 449–458 (AGGASPAASS) shows a compositional bias: low complexity. 2 positions are modified to phosphoserine: Ser-453 and Ser-457. Residues 503-550 (CTLCRERLEDTHFVQCPSVPGHKFCFPCSREFIKAQGPAGEVYCPSGD) form an RING-type; degenerate zinc finger. Residues 503–550 (CTLCRERLEDTHFVQCPSVPGHKFCFPCSREFIKAQGPAGEVYCPSGD) form a cys-rich region.

This sequence belongs to the IRF2BP family. As to quaternary structure, interacts with IRF2. Part of a corepressor complex containing IRF2 and IRF2BP2. Interacts with JDP2.

It localises to the nucleus. It catalyses the reaction S-ubiquitinyl-[E2 ubiquitin-conjugating enzyme]-L-cysteine + [acceptor protein]-L-lysine = [E2 ubiquitin-conjugating enzyme]-L-cysteine + N(6)-ubiquitinyl-[acceptor protein]-L-lysine.. In terms of biological role, acts as a transcriptional corepressor in a IRF2-dependent manner; this repression is not mediated by histone deacetylase activities. May act as an E3 ligase towards JDP2, enhancing its polyubiquitination. Represses ATF2-dependent transcriptional activation. The protein is Interferon regulatory factor 2-binding protein 1 (Irf2bp1) of Mus musculus (Mouse).